The following is a 328-amino-acid chain: Tetraacyldisaccharide 4'-kinase (328 aa).

55–62 serves as a coordination point for ATP; it reads TAGGNGKT.

The protein belongs to the LpxK family.

It carries out the reaction a lipid A disaccharide + ATP = a lipid IVA + ADP + H(+). It participates in glycolipid biosynthesis; lipid IV(A) biosynthesis; lipid IV(A) from (3R)-3-hydroxytetradecanoyl-[acyl-carrier-protein] and UDP-N-acetyl-alpha-D-glucosamine: step 6/6. Its function is as follows. Transfers the gamma-phosphate of ATP to the 4'-position of a tetraacyldisaccharide 1-phosphate intermediate (termed DS-1-P) to form tetraacyldisaccharide 1,4'-bis-phosphate (lipid IVA). This chain is Tetraacyldisaccharide 4'-kinase, found in Shigella boydii serotype 4 (strain Sb227).